Consider the following 361-residue polypeptide: 3-dehydroquinate synthase (361 aa).

Residues 71-76 (DGEQYK), 105-109 (GVIGD), 129-130 (TT), lysine 142, and lysine 151 each bind NAD(+). 3 residues coordinate Zn(2+): glutamate 184, histidine 247, and histidine 264.

Belongs to the sugar phosphate cyclases superfamily. Dehydroquinate synthase family. Co(2+) serves as cofactor. Zn(2+) is required as a cofactor. The cofactor is NAD(+).

The protein resides in the cytoplasm. The enzyme catalyses 7-phospho-2-dehydro-3-deoxy-D-arabino-heptonate = 3-dehydroquinate + phosphate. The protein operates within metabolic intermediate biosynthesis; chorismate biosynthesis; chorismate from D-erythrose 4-phosphate and phosphoenolpyruvate: step 2/7. Its function is as follows. Catalyzes the conversion of 3-deoxy-D-arabino-heptulosonate 7-phosphate (DAHP) to dehydroquinate (DHQ). The polypeptide is 3-dehydroquinate synthase (Pectobacterium atrosepticum (strain SCRI 1043 / ATCC BAA-672) (Erwinia carotovora subsp. atroseptica)).